The primary structure comprises 329 residues: Protein SPATA31F3 (329 aa).

The chain crosses the membrane as a helical span at residues 11–31 (VGYSVYTYGSIFIIALIIWQV). Residues 58-85 (SDRATRAKRTSKEEAEKLQKLLDTMKSQ) adopt a coiled-coil conformation. 3 disordered regions span residues 149-184 (ADRS…RSAT), 201-250 (QQLD…AAPT), and 288-329 (KPMT…KRNI). Phosphoserine is present on residues S152 and S153. Polar residues-rich tracts occupy residues 154 to 184 (ELTY…RSAT) and 201 to 223 (QQLD…SSTD). Residues 232–242 (QKKRKKTKKLA) show a composition bias toward basic residues. A compositionally biased stretch (basic and acidic residues) spans 293 to 320 (EPEKTHSPVRDQAEGAEKKKKPECDLKA).

It belongs to the SPATA31 family.

It is found in the membrane. This chain is Protein SPATA31F3, found in Rattus norvegicus (Rat).